We begin with the raw amino-acid sequence, 321 residues long: Lipoyl synthase (321 aa).

Residues cysteine 68, cysteine 73, cysteine 79, cysteine 94, cysteine 98, cysteine 101, and serine 308 each coordinate [4Fe-4S] cluster. Residues 80-297 (FNHGTATFMI…KAEAMAMGFT (218 aa)) enclose the Radical SAM core domain.

The protein belongs to the radical SAM superfamily. Lipoyl synthase family. [4Fe-4S] cluster serves as cofactor.

It localises to the cytoplasm. The catalysed reaction is [[Fe-S] cluster scaffold protein carrying a second [4Fe-4S](2+) cluster] + N(6)-octanoyl-L-lysyl-[protein] + 2 oxidized [2Fe-2S]-[ferredoxin] + 2 S-adenosyl-L-methionine + 4 H(+) = [[Fe-S] cluster scaffold protein] + N(6)-[(R)-dihydrolipoyl]-L-lysyl-[protein] + 4 Fe(3+) + 2 hydrogen sulfide + 2 5'-deoxyadenosine + 2 L-methionine + 2 reduced [2Fe-2S]-[ferredoxin]. It participates in protein modification; protein lipoylation via endogenous pathway; protein N(6)-(lipoyl)lysine from octanoyl-[acyl-carrier-protein]: step 2/2. Its function is as follows. Catalyzes the radical-mediated insertion of two sulfur atoms into the C-6 and C-8 positions of the octanoyl moiety bound to the lipoyl domains of lipoate-dependent enzymes, thereby converting the octanoylated domains into lipoylated derivatives. This chain is Lipoyl synthase, found in Enterobacter sp. (strain 638).